Consider the following 510-residue polypeptide: GPI mannosyltransferase 3 (510 aa).

7 helical membrane passes run 17 to 37 (TVLVVIAAFRVANALTTKTFF), 96 to 116 (IAPKIVMALFASAGDVYTWKL), 123 to 143 (PAEAPWALFVSLLSAFNWFFL), 145 to 163 (RTFSNSAEMVLTAVALNYW), 179 to 199 (LFIGAISCVLRPTNAILWAVL), 221 to 241 (VALVFAATYYIDYLYYGEPVF), and 269 to 289 (YEALPLLTVGWLPLTLWGLWI). N-linked (GlcNAc...) asparagine glycosylation occurs at Asn-290. A run of 2 helical transmembrane segments spans residues 316-336 (FIYPLVPILHMAAAEAITQTP) and 342-362 (WLVWSLALVNILVAGYFSQVH).

Belongs to the glycosyltransferase 22 family. PIGB subfamily.

The protein localises to the endoplasmic reticulum membrane. The protein operates within glycolipid biosynthesis; glycosylphosphatidylinositol-anchor biosynthesis. Functionally, mannosyltransferase involved in glycosylphosphatidylinositol-anchor biosynthesis. Transfers the third mannose to Man2-GlcN-acyl-PI during GPI precursor assembly. This chain is GPI mannosyltransferase 3 (GPI10), found in Yarrowia lipolytica (strain CLIB 122 / E 150) (Yeast).